A 64-amino-acid polypeptide reads, in one-letter code: MKVNDRVTVKTDGGPRRPGVVLAVEEFSEGIMYLVSLEDYPLGIWFFNESGHQDGIFVEKAEQD.

This sequence belongs to the DsrB family.

The chain is Protein DsrB from Salmonella arizonae (strain ATCC BAA-731 / CDC346-86 / RSK2980).